We begin with the raw amino-acid sequence, 486 residues long: Maintenance of mitochondrial morphology protein 1 (486 aa).

Over 1 to 20 (MNFQQSAIPPFSFLLSFTQG) the chain is Lumenal. A helical transmembrane segment spans residues 21–41 (FLLGQLSVVLLIGAFIKFFIF). The Cytoplasmic portion of the chain corresponds to 42 to 486 (GEAPPPPSRG…GSLPDGAVGN (445 aa)). Disordered stretches follow at residues 70 to 96 (TNEA…SSST), 271 to 320 (TPPL…SPKS), and 387 to 486 (RTGV…AVGN). The segment covering 83 to 96 (STSNVLRPVPSSST) has biased composition (polar residues). Residues 128–379 (QPESLDWFNV…EPRVQVVGLP (252 aa)) form the SMP-LTD domain. Residues 271-282 (TPPLHTPSPSPA) show a composition bias toward pro residues. Residues 292 to 306 (QSQPENNSSNPNQQS) are compositionally biased toward low complexity. 2 stretches are compositionally biased toward polar residues: residues 398–407 (TGSNAASRSA) and 440–450 (DSVSRSSSFNV). The span at 460–474 (MTREDSRGAISDDFH) shows a compositional bias: basic and acidic residues.

This sequence belongs to the MMM1 family. Homodimer. Component of the ER-mitochondria encounter structure (ERMES) or MDM complex, composed of mmm1, mdm10, mdm12 and mdm34. A mmm1 homodimer associates with one molecule of mdm12 on each side in a pairwise head-to-tail manner, and the SMP-LTD domains of mmm1 and mdm12 generate a continuous hydrophobic tunnel for phospholipid trafficking.

Its subcellular location is the endoplasmic reticulum membrane. Functionally, component of the ERMES/MDM complex, which serves as a molecular tether to connect the endoplasmic reticulum (ER) and mitochondria. Components of this complex are involved in the control of mitochondrial shape and protein biogenesis, and function in nonvesicular lipid trafficking between the ER and mitochondria. The mdm12-mmm1 subcomplex functions in the major beta-barrel assembly pathway that is responsible for biogenesis of all outer membrane beta-barrel proteins, and acts in a late step after the SAM complex. The mdm10-mdm12-mmm1 subcomplex further acts in the TOM40-specific pathway after the action of the mdm12-mmm1 complex. Essential for establishing and maintaining the structure of mitochondria and maintenance of mtDNA nucleoids. The sequence is that of Maintenance of mitochondrial morphology protein 1 from Aspergillus terreus (strain NIH 2624 / FGSC A1156).